Here is a 270-residue protein sequence, read N- to C-terminus: Tryptophan synthase alpha chain (270 aa).

Catalysis depends on proton acceptor residues Glu-57 and Asp-68.

It belongs to the TrpA family. Tetramer of two alpha and two beta chains.

It carries out the reaction (1S,2R)-1-C-(indol-3-yl)glycerol 3-phosphate + L-serine = D-glyceraldehyde 3-phosphate + L-tryptophan + H2O. Its pathway is amino-acid biosynthesis; L-tryptophan biosynthesis; L-tryptophan from chorismate: step 5/5. Functionally, the alpha subunit is responsible for the aldol cleavage of indoleglycerol phosphate to indole and glyceraldehyde 3-phosphate. The protein is Tryptophan synthase alpha chain of Mycobacterium leprae (strain Br4923).